A 361-amino-acid polypeptide reads, in one-letter code: Phosphoserine aminotransferase (361 aa).

Arg43 provides a ligand contact to L-glutamate. Residues 77–78 (AS), Trp103, Thr153, Asp173, and Gln196 each bind pyridoxal 5'-phosphate. Position 197 is an N6-(pyridoxal phosphate)lysine (Lys197). 238–239 (NT) is a pyridoxal 5'-phosphate binding site.

It belongs to the class-V pyridoxal-phosphate-dependent aminotransferase family. SerC subfamily. Homodimer. The cofactor is pyridoxal 5'-phosphate.

The protein localises to the cytoplasm. The enzyme catalyses O-phospho-L-serine + 2-oxoglutarate = 3-phosphooxypyruvate + L-glutamate. It carries out the reaction 4-(phosphooxy)-L-threonine + 2-oxoglutarate = (R)-3-hydroxy-2-oxo-4-phosphooxybutanoate + L-glutamate. The protein operates within amino-acid biosynthesis; L-serine biosynthesis; L-serine from 3-phospho-D-glycerate: step 2/3. It participates in cofactor biosynthesis; pyridoxine 5'-phosphate biosynthesis; pyridoxine 5'-phosphate from D-erythrose 4-phosphate: step 3/5. Functionally, catalyzes the reversible conversion of 3-phosphohydroxypyruvate to phosphoserine and of 3-hydroxy-2-oxo-4-phosphonooxybutanoate to phosphohydroxythreonine. This chain is Phosphoserine aminotransferase, found in Pseudomonas entomophila (strain L48).